The primary structure comprises 282 residues: Shikimate dehydrogenase (NADP(+)) (282 aa).

Shikimate is bound by residues 15–17 (SKS) and T62. K66 serves as the catalytic Proton acceptor. Shikimate is bound by residues N87 and D103. NADP(+) is bound by residues 127–131 (GAGGA), 151–156 (NRTHTK), and M220. Residue Y222 participates in shikimate binding. G244 provides a ligand contact to NADP(+).

It belongs to the shikimate dehydrogenase family. In terms of assembly, homodimer.

It carries out the reaction shikimate + NADP(+) = 3-dehydroshikimate + NADPH + H(+). The protein operates within metabolic intermediate biosynthesis; chorismate biosynthesis; chorismate from D-erythrose 4-phosphate and phosphoenolpyruvate: step 4/7. Its function is as follows. Involved in the biosynthesis of the chorismate, which leads to the biosynthesis of aromatic amino acids. Catalyzes the reversible NADPH linked reduction of 3-dehydroshikimate (DHSA) to yield shikimate (SA). This Shewanella putrefaciens (strain CN-32 / ATCC BAA-453) protein is Shikimate dehydrogenase (NADP(+)).